The chain runs to 518 residues: Delta(14)-sterol reductase erg24B (518 aa).

N36 carries an N-linked (GlcNAc...) asparagine glycan. The next 6 helical transmembrane spans lie at 110-130 (VTMWVLSYYLLSLLMQVFLPG), 150-170 (AFLSAVLILSGCAVGTYLYGT), 182-202 (YVQVITANLIICTAIAIFVYL), 294-314 (IVLTTAFQAFYVLDALYMEPA), 321-341 (VIMDGFGFMLSFGDMVWVPFL), and 355-375 (ELGLSGILIVLAVTAAGYVIF). NADP(+) is bound by residues K382, R386, L409, W414, and 421–422 (NY). The chain crosses the membrane as a helical span at residues 464–484 (SRGWGMIFTYFYMIYFGVLLL). NADP(+) is bound by residues D490, 494–498 (CKRKY), and Y505.

This sequence belongs to the ERG4/ERG24 family.

It is found in the endoplasmic reticulum membrane. It functions in the pathway steroid metabolism; ergosterol biosynthesis. Its function is as follows. Delta(14)-sterol reductase; part of the third module of ergosterol biosynthesis pathway that includes the late steps of the pathway. Catalyzes the reduction of the C14=C15 double bond within 4,4,24-trimethyl ergosta-8,14,24(28)-trienolto produce 4,4-dimethylfecosterol. The third module or late pathway involves the ergosterol synthesis itself through consecutive reactions that mainly occur in the endoplasmic reticulum (ER) membrane. Firstly, the squalene synthase erg9 catalyzes the condensation of 2 farnesyl pyrophosphate moieties to form squalene, which is the precursor of all steroids. Squalene synthase is crucial for balancing the incorporation of farnesyl diphosphate (FPP) into sterol and nonsterol isoprene synthesis. Secondly, squalene is converted into lanosterol by the consecutive action of the squalene epoxidase erg1 and the lanosterol synthase erg7. Then, the delta(24)-sterol C-methyltransferase erg6 methylates lanosterol at C-24 to produce eburicol. Eburicol is the substrate of the sterol 14-alpha demethylase encoded by cyp51A and cyp51B, to yield 4,4,24-trimethyl ergosta-8,14,24(28)-trienol. The C-14 reductase erg24 then reduces the C14=C15 double bond which leads to 4,4-dimethylfecosterol. A sequence of further demethylations at C-4, involving the C-4 demethylation complex containing the C-4 methylsterol oxidases erg25A or erg25B, the sterol-4-alpha-carboxylate 3-dehydrogenase erg26 and the 3-keto-steroid reductase erg27, leads to the production of fecosterol via 4-methylfecosterol. The C-8 sterol isomerase erg2 then catalyzes the reaction which results in unsaturation at C-7 in the B ring of sterols and thus converts fecosterol to episterol. The sterol-C5-desaturase erg3B then catalyzes the introduction of a C-5 double bond in the B ring to produce 5-dehydroepisterol. The 2 other sterol-C5-desaturases, erg3A and erg3C, seem to be less important in ergosterol biosynthesis. The C-22 sterol desaturase erg5 further converts 5-dehydroepisterol into ergosta-5,7,22,24(28)-tetraen-3beta-ol by forming the C-22(23) double bond in the sterol side chain. Finally, ergosta-5,7,22,24(28)-tetraen-3beta-ol is substrate of the C-24(28) sterol reductases erg4A and erg4B to produce ergosterol. Possible alternative sterol biosynthetic pathways might exist from fecosterol to ergosterol, depending on the activities of the erg3 isoforms. The chain is Delta(14)-sterol reductase erg24B from Aspergillus fumigatus (strain ATCC MYA-4609 / CBS 101355 / FGSC A1100 / Af293) (Neosartorya fumigata).